A 418-amino-acid chain; its full sequence is Magnesium transporter MRS2-E (418 aa).

The segment at 119–146 is disordered; it reads DAAPSTNPAAADRGNGTEQGDQGSVPGL. Positions 166 to 232 form a coiled coil; the sequence is VCLEHACKDL…RDELEHLLDD (67 aa). Positions 258–268 are enriched in basic and acidic residues; the sequence is DSHKYASVDHD. Positions 258–287 are disordered; sequence DSHKYASVDHDDDREEEDHDDETESGRESS. The segment covering 269–280 has biased composition (acidic residues); the sequence is DDREEEDHDDET. A helical transmembrane segment spans residues 344 to 364; that stretch reads GVMLTTATVVVTAGIVVVSLF. The Required for magnesium transport activity signature appears at 365 to 367; that stretch reads GMN. Residues 389 to 409 form a helical membrane-spanning segment; the sequence is FWETTFGTVAGCIAIYLLAIY.

Belongs to the CorA metal ion transporter (MIT) (TC 1.A.35.5) family.

The protein resides in the membrane. Functionally, magnesium transporter that may mediate the influx of magnesium. The chain is Magnesium transporter MRS2-E (MRS2-E) from Oryza sativa subsp. indica (Rice).